A 789-amino-acid polypeptide reads, in one-letter code: Disintegrin and metalloproteinase domain-containing protein 7 (789 aa).

Residues 1-23 (MLTTGIFWMTVLISHIQERGIVG) form the signal peptide. The propeptide occupies 24-176 (VEGQELVHPK…NHSCVGLNFT (153 aa)). Residues 24 to 667 (VEGQELVHPK…EWGEALNLTS (644 aa)) are Extracellular-facing. N-linked (GlcNAc...) asparagine glycosylation is found at N84, N167, and N174. One can recognise a Peptidase M12B domain in the interval 199 to 393 (KFIELFVVAD…QKPACILNNP (195 aa)). 4 disulfide bridges follow: C310-C388, C350-C372, C352-C357, and C459-C479. The Disintegrin domain occupies 401 to 487 (YPFCGNKKVD…ECPKDEFQAN (87 aa)). 3 N-linked (GlcNAc...) asparagine glycosylation sites follow: N583, N628, and N664. The helical transmembrane segment at 668–689 (VSIMVIVLVMVIIGVGLVILLI) threads the bilayer. At 690–789 (RYQKCIKMKQ…DTQSGCERLG (100 aa)) the chain is on the cytoplasmic side. The interval 764–789 (RGIADPKQTDNVNLNLDTQSGCERLG) is disordered. Residues 772–789 (TDNVNLNLDTQSGCERLG) show a composition bias toward polar residues.

Interacts with ITM2B in sperm; the interaction increases following capacitation. Interacts with HSPA5 and CANX. As to expression, expressed in both the head and tails of sperm (at protein level). Expressed in the epididymis (at protein level). Abundantly expressed in the apical region of the proximal caput epididymal epithelium, with decreasing expression in the mid and distal caput epididymal epithelium.

It localises to the membrane. Functionally, required for normal male fertility via maintenance of epithelial cell morphology in the caput epididymis and subsequently correct epididymis lumen structure required for sperm development. Plays a role in sperm motility, flagella morphology and tyrosine phosphorylation during sperm capacitance. Plays a role in normal expression levels of HSPA5, ITM2B and ADAM2 in sperm both prior to and post-capacitation. This is a non catalytic metalloprotease-like protein. This Mus musculus (Mouse) protein is Disintegrin and metalloproteinase domain-containing protein 7.